Here is a 280-residue protein sequence, read N- to C-terminus: 2-dehydro-3-deoxyphosphooctonate aldolase 2 (280 aa).

Belongs to the KdsA family.

Its subcellular location is the cytoplasm. The enzyme catalyses D-arabinose 5-phosphate + phosphoenolpyruvate + H2O = 3-deoxy-alpha-D-manno-2-octulosonate-8-phosphate + phosphate. It participates in carbohydrate biosynthesis; 3-deoxy-D-manno-octulosonate biosynthesis; 3-deoxy-D-manno-octulosonate from D-ribulose 5-phosphate: step 2/3. Its pathway is bacterial outer membrane biogenesis; lipopolysaccharide biosynthesis. The polypeptide is 2-dehydro-3-deoxyphosphooctonate aldolase 2 (kdsA2) (Pseudomonas putida (strain ATCC 47054 / DSM 6125 / CFBP 8728 / NCIMB 11950 / KT2440)).